The sequence spans 34 residues: Turripeptide Pal9a (34 aa).

Cystine bridges form between Cys-3–Cys-17, Cys-8–Cys-19, and Cys-13–Cys-30. The residue at position 34 (Gln-34) is a Glutamine amide.

Expressed by the venom duct.

It localises to the secreted. This is Turripeptide Pal9a from Polystira albida (White giant-turris).